A 119-amino-acid chain; its full sequence is Large ribosomal subunit protein uL18 (119 aa).

The segment at 1–20 (MSQIDKAARRQKIKARSRAT) is disordered. The segment covering 9–19 (RRQKIKARSRA) has biased composition (basic residues).

This sequence belongs to the universal ribosomal protein uL18 family. As to quaternary structure, part of the 50S ribosomal subunit; part of the 5S rRNA/L5/L18/L25 subcomplex. Contacts the 5S and 23S rRNAs.

Functionally, this is one of the proteins that bind and probably mediate the attachment of the 5S RNA into the large ribosomal subunit, where it forms part of the central protuberance. In Chlorobaculum parvum (strain DSM 263 / NCIMB 8327) (Chlorobium vibrioforme subsp. thiosulfatophilum), this protein is Large ribosomal subunit protein uL18.